Here is a 302-residue protein sequence, read N- to C-terminus: Protoheme IX farnesyltransferase 1 (302 aa).

Helical transmembrane passes span 30–50 (VVAL…PGAV), 52–72 (LQPL…AAAF), 102–122 (ALTF…TLVN), 124–144 (LTAW…TAYL), 152–172 (IVVG…SVTG), 178–198 (ALLL…ALAI), 224–244 (CILL…LVGM), 245–265 (CGPL…YKSW), and 282–302 (FSIY…YLWV).

The protein belongs to the UbiA prenyltransferase family. Protoheme IX farnesyltransferase subfamily.

The protein resides in the cell inner membrane. It carries out the reaction heme b + (2E,6E)-farnesyl diphosphate + H2O = Fe(II)-heme o + diphosphate. Its pathway is porphyrin-containing compound metabolism; heme O biosynthesis; heme O from protoheme: step 1/1. In terms of biological role, converts heme B (protoheme IX) to heme O by substitution of the vinyl group on carbon 2 of heme B porphyrin ring with a hydroxyethyl farnesyl side group. This Shewanella woodyi (strain ATCC 51908 / MS32) protein is Protoheme IX farnesyltransferase 1.